A 256-amino-acid chain; its full sequence is Hydroxyacylglutathione hydrolase (256 aa).

Zn(2+)-binding residues include His-57, His-59, Asp-61, His-62, His-115, Asp-134, and His-172.

The protein belongs to the metallo-beta-lactamase superfamily. Glyoxalase II family. In terms of assembly, monomer. It depends on Zn(2+) as a cofactor.

The enzyme catalyses an S-(2-hydroxyacyl)glutathione + H2O = a 2-hydroxy carboxylate + glutathione + H(+). Its pathway is secondary metabolite metabolism; methylglyoxal degradation; (R)-lactate from methylglyoxal: step 2/2. Functionally, thiolesterase that catalyzes the hydrolysis of S-D-lactoyl-glutathione to form glutathione and D-lactic acid. This Rhizobium meliloti (strain 1021) (Ensifer meliloti) protein is Hydroxyacylglutathione hydrolase.